The chain runs to 259 residues: NADP-dependent 3-hydroxy acid dehydrogenase (259 aa).

Ile11 provides a ligand contact to NADP(+). Residue Ser42 is modified to Phosphoserine. Thr43 carries the phosphothreonine modification. 6 residues coordinate NADP(+): Asp65, Asn92, Arg126, Tyr158, Lys162, and Val191. Tyr158 (proton acceptor) is an active-site residue. The active-site Lowers pKa of active site Tyr is the Lys162.

The protein belongs to the short-chain dehydrogenases/reductases (SDR) family. As to quaternary structure, homotetramer.

It is found in the cytoplasm. Its subcellular location is the nucleus. The enzyme catalyses L-allo-threonine + NADP(+) = aminoacetone + CO2 + NADPH. Its function is as follows. NADP-dependent dehydrogenase with broad substrate specificity acting on 3-hydroxy acids. Catalyzes the NADP-dependent oxidation of L-allo-threonine to L-2-amino-3-keto-butyrate, which is spontaneously decarboxylated into aminoacetone. Also acts on D-threonine, L-serine, D-serine, D-3-hydroxyisobutyrate, L-3-hydroxyisobutyrate, D-glycerate and L-glycerate. The chain is NADP-dependent 3-hydroxy acid dehydrogenase from Schizosaccharomyces pombe (strain 972 / ATCC 24843) (Fission yeast).